Consider the following 740-residue polypeptide: 1,4-alpha-glucan branching enzyme GlgB (740 aa).

The active-site Nucleophile is the Asp419. Glu472 functions as the Proton donor in the catalytic mechanism.

Belongs to the glycosyl hydrolase 13 family. GlgB subfamily. As to quaternary structure, monomer.

The catalysed reaction is Transfers a segment of a (1-&gt;4)-alpha-D-glucan chain to a primary hydroxy group in a similar glucan chain.. The protein operates within glycan biosynthesis; glycogen biosynthesis. Functionally, catalyzes the formation of the alpha-1,6-glucosidic linkages in glycogen by scission of a 1,4-alpha-linked oligosaccharide from growing alpha-1,4-glucan chains and the subsequent attachment of the oligosaccharide to the alpha-1,6 position. The sequence is that of 1,4-alpha-glucan branching enzyme GlgB from Thiobacillus denitrificans (strain ATCC 25259 / T1).